A 235-amino-acid chain; its full sequence is Aspartate/glutamate leucyltransferase (235 aa).

The protein belongs to the R-transferase family. Bpt subfamily.

The protein localises to the cytoplasm. The enzyme catalyses N-terminal L-glutamyl-[protein] + L-leucyl-tRNA(Leu) = N-terminal L-leucyl-L-glutamyl-[protein] + tRNA(Leu) + H(+). It carries out the reaction N-terminal L-aspartyl-[protein] + L-leucyl-tRNA(Leu) = N-terminal L-leucyl-L-aspartyl-[protein] + tRNA(Leu) + H(+). Functionally, functions in the N-end rule pathway of protein degradation where it conjugates Leu from its aminoacyl-tRNA to the N-termini of proteins containing an N-terminal aspartate or glutamate. The protein is Aspartate/glutamate leucyltransferase of Pseudomonas fluorescens (strain Pf0-1).